The primary structure comprises 251 residues: Cell division protein ZapD (251 aa).

It belongs to the ZapD family. Interacts with FtsZ.

It is found in the cytoplasm. In terms of biological role, cell division factor that enhances FtsZ-ring assembly. Directly interacts with FtsZ and promotes bundling of FtsZ protofilaments, with a reduction in FtsZ GTPase activity. The protein is Cell division protein ZapD of Burkholderia orbicola (strain MC0-3).